We begin with the raw amino-acid sequence, 704 residues long: Protein NBR1 homolog (704 aa).

An N-acetylmethionine modification is found at Met1. Residues 7-92 (ALVVKVSYGG…KFLKINVNAG (86 aa)) form the PB1 domain. 3 stretches are compositionally biased toward polar residues: residues 95–108 (TNSA…SSTP), 171–189 (PQES…SGAS), and 223–233 (HSKTSGHVPNS). 2 disordered regions span residues 95–114 (TNSA…MPNP) and 171–233 (PQES…VPNS). A ZZ-type; degenerate zinc finger spans residues 286-336 (HKGIRCDGCGVLPITGPRFKSKVKEDYDLCTICYSVMGNEGDYTRMDKPVS). Zn(2+)-binding residues include Cys291, Cys294, Cys315, and Cys318. Residues 657–701 (GVSEWDPILEELQEMGFCDDVTNKRLLKKNNGSIKGVVMDLLTGE) form the UBA domain. Residues 661–664 (WDPI) carry the LIR motif.

Homodimer. Interacts with ATG8A, ATG8B, ATG8C, ATG8D, ATG8F and ATG8I. Binds to ubiquitin.

Its subcellular location is the cytoplasm. It localises to the vacuole. In terms of biological role, autophagic substrate degraded in the vacuole by non-selective autophagy. Requires ATG8 protein expression to be recognized as an autophagic substrate. Acts probably as a receptor for autophagosomal degradation of ubiquitinated proteins. Targets ubiquitinated protein aggregates derived from denatured or damaged non-native proteins generated under stress conditions. Functions additively with the E3 ubiquitin-protein ligase CHIP for autophagosomal degradation of proteotoxic aggregates formed under stress conditions. The protein is Protein NBR1 homolog of Arabidopsis thaliana (Mouse-ear cress).